The primary structure comprises 75 residues: Probable pilin MJ1469 (75 aa).

Positions 1-11 (MKPKKIISNKA) are excised as a propeptide. Positions 12–20 (QISLELALL) match the QXSXEXXXL motif.

In terms of processing, the N-terminus is cleaved by the prepilin peptidase EppA, which recognizes the class III signal sequence.

It is found in the secreted. The protein resides in the cell surface. It localises to the fimbrium. The chain is Probable pilin MJ1469 from Methanocaldococcus jannaschii (strain ATCC 43067 / DSM 2661 / JAL-1 / JCM 10045 / NBRC 100440) (Methanococcus jannaschii).